The primary structure comprises 131 residues: Profilin-1 (131 aa).

Belongs to the profilin family. Occurs in many kinds of cells as a complex with monomeric actin in a 1:1 ratio. Cytoplasmic distribution in hypocotyls. In root nodules, it is found in all cells, but is more abundant in the vascular tissue as well as the endodermis.

The protein resides in the cytoplasm. Its subcellular location is the cytoskeleton. In terms of biological role, binds to actin and affects the structure of the cytoskeleton. At high concentrations, profilin prevents the polymerization of actin, whereas it enhances it at low concentrations. By binding to PIP2, it inhibits the formation of IP3 and DG. The chain is Profilin-1 from Phaseolus vulgaris (Kidney bean).